The sequence spans 367 residues: Putrescine-binding periplasmic protein SpuD (367 aa).

The N-terminal stretch at 1 to 24 (MMKRFGKTLLALTLAGSVAGMAQA) is a signal peptide. 36 to 37 (SD) contacts putrescine. Cys173 and Cys236 are disulfide-bonded. Putrescine contacts are provided by Asp244 and Asp275.

Belongs to the bacterial solute-binding protein PotD/PotF family.

The protein resides in the periplasm. The protein localises to the secreted. Functionally, putrescine-binding protein probably required for putrescine uptake into cells. Binds putrescine with high affinity, spermidine with relatively low affinity. Does not bind cadaverine or spermine. Putrescine binding induces large inter-domain conformational changes. The sequence is that of Putrescine-binding periplasmic protein SpuD (spuD) from Pseudomonas aeruginosa (strain UCBPP-PA14).